A 765-amino-acid chain; its full sequence is Protein transport protein Sec23A (765 aa).

C61, C66, C85, and C88 together coordinate Zn(2+). The Gelsolin-like repeat unit spans residues P632–L718.

Belongs to the SEC23/SEC24 family. SEC23 subfamily. As to quaternary structure, COPII is composed of at least five proteins: the Sec23/24 complex, the Sec13/31 complex and Sar1.

Its subcellular location is the cytoplasmic vesicle. The protein localises to the COPII-coated vesicle membrane. The protein resides in the endoplasmic reticulum membrane. It localises to the cytoplasm. It is found in the cytosol. Its function is as follows. Component of the coat protein complex II (COPII) which promotes the formation of transport vesicles from the endoplasmic reticulum (ER). The coat has two main functions, the physical deformation of the endoplasmic reticulum membrane into vesicles and the selection of cargo molecules for their transport to the Golgi complex. This chain is Protein transport protein Sec23A, found in Xenopus tropicalis (Western clawed frog).